We begin with the raw amino-acid sequence, 351 residues long: Mitogen-activated protein kinase 2 (351 aa).

Residues Y16–L304 form the Protein kinase domain. ATP-binding positions include I22–V30 and K45. The active-site Proton acceptor is the D140. T176 carries the phosphothreonine modification. The TXY motif lies at T176 to Y178. The residue at position 178 (Y178) is a Phosphotyrosine.

The protein belongs to the protein kinase superfamily. CMGC Ser/Thr protein kinase family. MAP kinase subfamily. Requires Mg(2+) as cofactor. It depends on Mn(2+) as a cofactor. In terms of processing, dually phosphorylated on Thr-176 and Tyr-178, which activates the enzyme.

It localises to the nucleus. The enzyme catalyses L-seryl-[protein] + ATP = O-phospho-L-seryl-[protein] + ADP + H(+). The catalysed reaction is L-threonyl-[protein] + ATP = O-phospho-L-threonyl-[protein] + ADP + H(+). Its activity is regulated as follows. Activated by tyrosine and threonine phosphorylation. Inhibited by the MEK inhibitor U0126 but not by the p38 inhibitor SB203580. Cobalt abolishes kinase activity, while calcium, copper and nickel have little effect on kinase activity. Its function is as follows. Serine-threonine protein kinase which may be involved in pheromone signaling. Functionally complements the MAPK pheromone signaling pathway in S.cerevisiae. The chain is Mitogen-activated protein kinase 2 from Pneumocystis carinii.